The chain runs to 123 residues: Small ribosomal subunit protein uS13 (123 aa).

Residues 92–123 are disordered; that stretch reads HRRGLPVRGQKTKTNARTRKGPKKLVVSRKKK.

This sequence belongs to the universal ribosomal protein uS13 family. In terms of assembly, part of the 30S ribosomal subunit. Forms a loose heterodimer with protein S19. Forms two bridges to the 50S subunit in the 70S ribosome.

Its function is as follows. Located at the top of the head of the 30S subunit, it contacts several helices of the 16S rRNA. In the 70S ribosome it contacts the 23S rRNA (bridge B1a) and protein L5 of the 50S subunit (bridge B1b), connecting the 2 subunits; these bridges are implicated in subunit movement. Contacts the tRNAs in the A and P-sites. The protein is Small ribosomal subunit protein uS13 of Clostridium tetani (strain Massachusetts / E88).